Consider the following 147-residue polypeptide: Large ribosomal subunit protein uL15 (147 aa).

Residues 1–20 show a composition bias toward basic and acidic residues; sequence MTMHLNDLKPADGARTERTR. The tract at residues 1–64 is disordered; that stretch reads MTMHLNDLKP…GGQTPMQRRL (64 aa). Residues 23 to 33 are compositionally biased toward gly residues; the sequence is RGIGSGLGKTC. Basic residues predominate over residues 34–47; that stretch reads GRGHKGSFARKGGG.

Belongs to the universal ribosomal protein uL15 family. As to quaternary structure, part of the 50S ribosomal subunit.

In terms of biological role, binds to the 23S rRNA. The chain is Large ribosomal subunit protein uL15 from Xanthomonas campestris pv. campestris (strain 8004).